The sequence spans 562 residues: Dihydroxy-acid dehydratase (562 aa).

Aspartate 80 is a Mg(2+) binding site. Cysteine 121 contributes to the [2Fe-2S] cluster binding site. Mg(2+) contacts are provided by aspartate 122 and lysine 123. An N6-carboxylysine modification is found at lysine 123. Residue cysteine 194 participates in [2Fe-2S] cluster binding. A Mg(2+)-binding site is contributed by glutamate 446. Catalysis depends on serine 472, which acts as the Proton acceptor.

The protein belongs to the IlvD/Edd family. In terms of assembly, homodimer. [2Fe-2S] cluster is required as a cofactor. The cofactor is Mg(2+).

The catalysed reaction is (2R)-2,3-dihydroxy-3-methylbutanoate = 3-methyl-2-oxobutanoate + H2O. The enzyme catalyses (2R,3R)-2,3-dihydroxy-3-methylpentanoate = (S)-3-methyl-2-oxopentanoate + H2O. Its pathway is amino-acid biosynthesis; L-isoleucine biosynthesis; L-isoleucine from 2-oxobutanoate: step 3/4. It participates in amino-acid biosynthesis; L-valine biosynthesis; L-valine from pyruvate: step 3/4. Functionally, functions in the biosynthesis of branched-chain amino acids. Catalyzes the dehydration of (2R,3R)-2,3-dihydroxy-3-methylpentanoate (2,3-dihydroxy-3-methylvalerate) into 2-oxo-3-methylpentanoate (2-oxo-3-methylvalerate) and of (2R)-2,3-dihydroxy-3-methylbutanoate (2,3-dihydroxyisovalerate) into 2-oxo-3-methylbutanoate (2-oxoisovalerate), the penultimate precursor to L-isoleucine and L-valine, respectively. The chain is Dihydroxy-acid dehydratase from Staphylococcus aureus (strain Mu50 / ATCC 700699).